Reading from the N-terminus, the 304-residue chain is N-carbamoyl-D-amino acid hydrolase (304 aa).

The region spanning 5-276 (MILAVGQQGP…DEVITAAVDL (272 aa)) is the CN hydrolase domain. Catalysis depends on residues Glu47, Lys127, and Cys172.

The enzyme catalyses an N-carbamoyl-D-amino acid + H2O + 2 H(+) = a D-alpha-amino acid + NH4(+) + CO2. In terms of biological role, the enzyme catalyzes the hydrolysis of N-carbamoyl-D-amino acids to the corresponding which are useful intermediates in the preparation of beta-lactam antibiotics. Industrial production of beta-lactam antibiotics is now being developed using this enzyme. This Agrobacterium sp. (strain KNK712) protein is N-carbamoyl-D-amino acid hydrolase.